Reading from the N-terminus, the 407-residue chain is Argininosuccinate synthase (407 aa).

ATP-binding positions include Ala-12 to Ser-20 and Ala-39. L-citrulline contacts are provided by Tyr-92 and Ser-97. Gly-122 contacts ATP. The L-aspartate site is built by Thr-124, Asn-128, and Asp-129. Position 128 (Asn-128) interacts with L-citrulline. 5 residues coordinate L-citrulline: Arg-132, Ser-183, Ser-192, Glu-268, and Tyr-280.

It belongs to the argininosuccinate synthase family. Type 1 subfamily. In terms of assembly, homotetramer.

The protein resides in the cytoplasm. It carries out the reaction L-citrulline + L-aspartate + ATP = 2-(N(omega)-L-arginino)succinate + AMP + diphosphate + H(+). It functions in the pathway amino-acid biosynthesis; L-arginine biosynthesis; L-arginine from L-ornithine and carbamoyl phosphate: step 2/3. The chain is Argininosuccinate synthase from Caulobacter sp. (strain K31).